Consider the following 103-residue polypeptide: UPF0145 protein CYB_1351 (103 aa).

This sequence belongs to the UPF0145 family.

This Synechococcus sp. (strain JA-2-3B'a(2-13)) (Cyanobacteria bacterium Yellowstone B-Prime) protein is UPF0145 protein CYB_1351.